The sequence spans 337 residues: ATP-dependent 6-phosphofructokinase (337 aa).

Residue Gly-11 participates in ATP binding. ADP is bound at residue 21 to 25 (RAVVR). Residues 72–73 (RY) and 102–105 (GDGS) contribute to the ATP site. Asp-103 is a binding site for Mg(2+). Substrate is bound at residue 125 to 127 (TID). Residue Asp-127 is the Proton acceptor of the active site. ADP is bound at residue Arg-154. Residues Arg-162 and 169–171 (MGR) each bind substrate. ADP is bound by residues 185–187 (GAD), Arg-212, and 214–216 (KNH). Substrate is bound by residues Glu-223, Arg-245, and 251–254 (HILR).

This sequence belongs to the phosphofructokinase type A (PFKA) family. ATP-dependent PFK group I subfamily. Prokaryotic clade 'B1' sub-subfamily. As to quaternary structure, homotetramer. The cofactor is Mg(2+).

It localises to the cytoplasm. It carries out the reaction beta-D-fructose 6-phosphate + ATP = beta-D-fructose 1,6-bisphosphate + ADP + H(+). Its pathway is carbohydrate degradation; glycolysis; D-glyceraldehyde 3-phosphate and glycerone phosphate from D-glucose: step 3/4. Its activity is regulated as follows. Allosterically activated by ADP and other diphosphonucleosides, and allosterically inhibited by phosphoenolpyruvate. Functionally, catalyzes the phosphorylation of D-fructose 6-phosphate to fructose 1,6-bisphosphate by ATP, the first committing step of glycolysis. The sequence is that of ATP-dependent 6-phosphofructokinase from Streptococcus equi subsp. zooepidemicus (strain H70).